The sequence spans 307 residues: Acetaldehyde dehydrogenase 2 (307 aa).

Residue 13–16 (SGNI) participates in NAD(+) binding. Catalysis depends on C132, which acts as the Acyl-thioester intermediate. NAD(+) contacts are provided by residues 163–171 (SIGPGTRAN) and N274.

This sequence belongs to the acetaldehyde dehydrogenase family.

The catalysed reaction is acetaldehyde + NAD(+) + CoA = acetyl-CoA + NADH + H(+). In Methylibium petroleiphilum (strain ATCC BAA-1232 / LMG 22953 / PM1), this protein is Acetaldehyde dehydrogenase 2.